The sequence spans 187 residues: Probable DNA-directed RNA polymerase subunit delta (187 aa).

In terms of domain architecture, HTH HARE-type spans 14-81; it reads LSMIEVAHAL…GNNVWALRSW (68 aa). Residues 96–187 form a disordered region; it reads EIEDEEEEKP…EDDSDDTDED (92 aa). Acidic residues-rich tracts occupy residues 117–149 and 157–187; these read IEDE…EDKD and ELAE…TDED.

It belongs to the RpoE family. In terms of assembly, RNAP is composed of a core of 2 alpha, a beta and a beta' subunits. The core is associated with a delta subunit and one of several sigma factors.

Its function is as follows. Participates in both the initiation and recycling phases of transcription. In the presence of the delta subunit, RNAP displays an increased specificity of transcription, a decreased affinity for nucleic acids, and an increased efficiency of RNA synthesis because of enhanced recycling. The protein is Probable DNA-directed RNA polymerase subunit delta of Lactococcus lactis subsp. cremoris (strain SK11).